The chain runs to 258 residues: Imidazole glycerol phosphate synthase subunit HisF (258 aa).

Active-site residues include aspartate 11 and aspartate 130.

Belongs to the HisA/HisF family. As to quaternary structure, heterodimer of HisH and HisF.

It is found in the cytoplasm. It catalyses the reaction 5-[(5-phospho-1-deoxy-D-ribulos-1-ylimino)methylamino]-1-(5-phospho-beta-D-ribosyl)imidazole-4-carboxamide + L-glutamine = D-erythro-1-(imidazol-4-yl)glycerol 3-phosphate + 5-amino-1-(5-phospho-beta-D-ribosyl)imidazole-4-carboxamide + L-glutamate + H(+). Its pathway is amino-acid biosynthesis; L-histidine biosynthesis; L-histidine from 5-phospho-alpha-D-ribose 1-diphosphate: step 5/9. Functionally, IGPS catalyzes the conversion of PRFAR and glutamine to IGP, AICAR and glutamate. The HisF subunit catalyzes the cyclization activity that produces IGP and AICAR from PRFAR using the ammonia provided by the HisH subunit. In Yersinia pseudotuberculosis serotype O:3 (strain YPIII), this protein is Imidazole glycerol phosphate synthase subunit HisF.